The primary structure comprises 373 residues: Cyclin-A3-1 (373 aa).

The disordered stretch occupies residues 50 to 80 (AVVLKPQPAPRGGKRAASHAAEPKKPAPPPA).

Belongs to the cyclin family. Cyclin AB subfamily.

This chain is Cyclin-A3-1 (CYCA3-1), found in Oryza sativa subsp. japonica (Rice).